A 42-amino-acid chain; its full sequence is Large ribosomal subunit protein eL32 (42 aa).

It belongs to the eukaryotic ribosomal protein eL32 family.

This chain is Large ribosomal subunit protein eL32 (RPL32), found in Zea mays (Maize).